A 569-amino-acid polypeptide reads, in one-letter code: Urease subunit alpha (569 aa).

One can recognise a Urease domain in the interval 131-569 (GGIDAHIHWI…LPLAQRYFLF (439 aa)). Residues histidine 136, histidine 138, and lysine 219 each contribute to the Ni(2+) site. Lysine 219 carries the N6-carboxylysine modification. Histidine 221 contacts substrate. Ni(2+) contacts are provided by histidine 248 and histidine 274. The active-site Proton donor is histidine 322. Position 362 (aspartate 362) interacts with Ni(2+).

Belongs to the metallo-dependent hydrolases superfamily. Urease alpha subunit family. As to quaternary structure, heterotrimer of UreA (gamma), UreB (beta) and UreC (alpha) subunits. Three heterotrimers associate to form the active enzyme. The cofactor is Ni cation. Post-translationally, carboxylation allows a single lysine to coordinate two nickel ions.

It localises to the cytoplasm. It carries out the reaction urea + 2 H2O + H(+) = hydrogencarbonate + 2 NH4(+). Its pathway is nitrogen metabolism; urea degradation; CO(2) and NH(3) from urea (urease route): step 1/1. The chain is Urease subunit alpha from Magnetococcus marinus (strain ATCC BAA-1437 / JCM 17883 / MC-1).